A 304-amino-acid polypeptide reads, in one-letter code: Opsin-1 (304 aa).

The Extracellular segment spans residues 1-45 (MIHPEQVADMLRPTTSTTSSHVPGPVPTVVPTPTEYQTLGETGHR). The chain crosses the membrane as a helical span at residues 46–66 (TLWVTFALMVLSSGIFALLSW). Residues 74–94 (LFHVITTLITVVASLSYFAMA) traverse the membrane as a helical segment. The chain crosses the membrane as a helical span at residues 129 to 149 (YVDWALTTPLLLLELCLLAGV). Residues 154 to 174 (TLMAIVADVIMVLCGLFAALG) form a helical membrane-spanning segment. Residues 183–203 (WGWYTIGCFSYLFVIWHVALH) form a helical membrane-spanning segment. Residues 219–239 (FTGLAVFALLLWTAYPIIWGI) form a helical membrane-spanning segment. The chain crosses the membrane as a helical span at residues 252 to 272 (ILIYTVLDLLAKPVFGFWLLL). Lysine 263 bears the N6-(retinylidene)lysine mark. Residues 273–304 (SHRAMPETNIDLPGYWSHGLATEGRIRIGEED) lie on the Cytoplasmic side of the membrane.

This sequence belongs to the archaeal/bacterial/fungal opsin family. Post-translationally, binds all-trans retinal via a protonated Schiff base linkage.

Its subcellular location is the membrane. Could facilitate a sensory photoresponse. The polypeptide is Opsin-1 (nop-1) (Neurospora crassa (strain ATCC 24698 / 74-OR23-1A / CBS 708.71 / DSM 1257 / FGSC 987)).